An 874-amino-acid polypeptide reads, in one-letter code: Eukaryotic translation initiation factor 3 subunit C (874 aa).

Positions 1 to 70 are disordered; that stretch reads MSRFFVSGYT…DGRPSGPAYF (70 aa). Residues 14-61 are compositionally biased toward acidic residues; sequence SSEEEDLLSTSEEELLSSSDEGEDNESDSSFFGEDDDESEESSSDDED. Residues 598–774 form the PCI domain; that stretch reads FHQHINLELL…KFISFTSTTE (177 aa). Positions 797-874 are disordered; the sequence is KNEKTQSNGY…SNNDEFQATA (78 aa). Low complexity predominate over residues 813–848; it reads KDQQNQQQQNQNQNQQQQQNQQQQQQQQSSQQQSNN. Over residues 862–874 the composition is skewed to polar residues; it reads NVNSNNDEFQATA.

It belongs to the eIF-3 subunit C family. Component of the eukaryotic translation initiation factor 3 (eIF-3) complex.

Its subcellular location is the cytoplasm. In terms of biological role, component of the eukaryotic translation initiation factor 3 (eIF-3) complex, which is involved in protein synthesis of a specialized repertoire of mRNAs and, together with other initiation factors, stimulates binding of mRNA and methionyl-tRNAi to the 40S ribosome. The eIF-3 complex specifically targets and initiates translation of a subset of mRNAs involved in cell proliferation. In Candida albicans (strain SC5314 / ATCC MYA-2876) (Yeast), this protein is Eukaryotic translation initiation factor 3 subunit C.